Consider the following 323-residue polypeptide: MDTRGVAAAMRPLVLLVAFLCTAAPALDTCPEVKVVGLEGSDKLSILRGCPGLPGAAGPKGEAGASGPKGGQGPPGAPGEPGPPGPKGDRGEKGEPGPKGESWETEQCLTGPRTCKELLTRGHILSGWHTIYLPDCQPLTVLCDMDTDGGGWTVFQRRSDGSVDFYRDWAAYKRGFGSQLGEFWLGNDHIHALTAQGTNELRVDLVDFEGNHQFAKYRSFQVADEAEKYMLVLGAFVEGNAGDSLTSHNNSLFTTKDQDNDQYASNCAVLYQGAWWYNSCHVSNLNGRYLGGSHGSFANGVNWSSGKGYNYSYKVSEMKFRAT.

An N-terminal signal peptide occupies residues 1-26; the sequence is MDTRGVAAAMRPLVLLVAFLCTAAPA. The 51-residue stretch at 52–102 folds into the Collagen-like domain; sequence GLPGAAGPKGEAGASGPKGGQGPPGAPGEPGPPGPKGDRGEKGEPGPKGES. Residues 55–66 show a composition bias toward low complexity; the sequence is GAAGPKGEAGAS. The segment at 55–107 is disordered; it reads GAAGPKGEAGASGPKGGQGPPGAPGEPGPPGPKGDRGEKGEPGPKGESWETEQ. The span at 75-86 shows a compositional bias: pro residues; that stretch reads PGAPGEPGPPGP. Positions 87–102 are enriched in basic and acidic residues; sequence KGDRGEKGEPGPKGES. A Fibrinogen C-terminal domain is found at 106–323; sequence EQCLTGPRTC…KVSEMKFRAT (218 aa). Cystine bridges form between Cys-108–Cys-136 and Cys-115–Cys-143. N-linked (GlcNAc...) asparagine glycosylation occurs at Asn-249. Residues Asp-259, Asp-261, and Ser-265 each coordinate Ca(2+). An intrachain disulfide couples Cys-267 to Cys-280. Residues Asn-302 and Asn-310 are each glycosylated (N-linked (GlcNAc...) asparagine).

This sequence belongs to the ficolin lectin family. Homotrimer. Interacts with elastin. Interacts with MASP1 and MASP2. In terms of tissue distribution, mainly expressed in skeletal muscle.

The protein resides in the secreted. In terms of biological role, may function in innate immunity through activation of the lectin complement pathway. Calcium-dependent and GlcNAc-binding lectin. The sequence is that of Ficolin-2 (FCN2) from Sus scrofa (Pig).